A 368-amino-acid polypeptide reads, in one-letter code: tRNA-specific 2-thiouridylase MnmA (368 aa).

ATP contacts are provided by residues 10 to 17 (AMSGGVDS) and Met-36. Cys-108 serves as the catalytic Nucleophile. Cys-108 and Cys-206 are joined by a disulfide. An ATP-binding site is contributed by Gly-132. Positions 156–158 (KDQ) are interaction with tRNA. Residue Cys-206 is the Cysteine persulfide intermediate of the active site. Residues 312–313 (RY) are interaction with tRNA.

It belongs to the MnmA/TRMU family.

It localises to the cytoplasm. The catalysed reaction is S-sulfanyl-L-cysteinyl-[protein] + uridine(34) in tRNA + AH2 + ATP = 2-thiouridine(34) in tRNA + L-cysteinyl-[protein] + A + AMP + diphosphate + H(+). Catalyzes the 2-thiolation of uridine at the wobble position (U34) of tRNA, leading to the formation of s(2)U34. This is tRNA-specific 2-thiouridylase MnmA from Natranaerobius thermophilus (strain ATCC BAA-1301 / DSM 18059 / JW/NM-WN-LF).